We begin with the raw amino-acid sequence, 94 residues long: Co-chaperonin GroES (94 aa).

It belongs to the GroES chaperonin family. Heptamer of 7 subunits arranged in a ring. Interacts with the chaperonin GroEL.

The protein localises to the cytoplasm. In terms of biological role, together with the chaperonin GroEL, plays an essential role in assisting protein folding. The GroEL-GroES system forms a nano-cage that allows encapsulation of the non-native substrate proteins and provides a physical environment optimized to promote and accelerate protein folding. GroES binds to the apical surface of the GroEL ring, thereby capping the opening of the GroEL channel. This Listeria welshimeri serovar 6b (strain ATCC 35897 / DSM 20650 / CCUG 15529 / CIP 8149 / NCTC 11857 / SLCC 5334 / V8) protein is Co-chaperonin GroES.